Reading from the N-terminus, the 360-residue chain is Putative transport protein BU123 (360 aa).

Helical transmembrane passes span 18–38 (IFIV…ILGF), 39–59 (FWAS…QKIL), 66–86 (AVII…FFLV), 161–181 (GLFI…YWNG), 204–224 (LLLA…TALI), 230–250 (GIGL…IIFF), 251–271 (SCLI…WLYW), 280–300 (ILLI…PFFI), and 316–336 (IGGL…VLVI).

Belongs to the autoinducer-2 exporter (AI-2E) (TC 2.A.86) family.

The protein localises to the cell membrane. The polypeptide is Putative transport protein BU123 (Buchnera aphidicola subsp. Acyrthosiphon pisum (strain APS) (Acyrthosiphon pisum symbiotic bacterium)).